Consider the following 301-residue polypeptide: Protoheme IX farnesyltransferase (301 aa).

9 helical membrane-spanning segments follow: residues 20–42, 55–75, 105–125, 126–146, 150–172, 176–198, 227–247, 249–269, and 280–300; these read FTEL…GMWL, VDVI…SGAF, ALMV…MTTW, QAGV…SLYA, LVSN…WFAV, FSMV…FYAI, MFFW…LGIV, VILA…GFKM, and FIYS…ISIF.

The protein belongs to the UbiA prenyltransferase family. Protoheme IX farnesyltransferase subfamily. In terms of assembly, interacts with CtaA.

The protein resides in the cell membrane. It catalyses the reaction heme b + (2E,6E)-farnesyl diphosphate + H2O = Fe(II)-heme o + diphosphate. It functions in the pathway porphyrin-containing compound metabolism; heme O biosynthesis; heme O from protoheme: step 1/1. Converts heme B (protoheme IX) to heme O by substitution of the vinyl group on carbon 2 of heme B porphyrin ring with a hydroxyethyl farnesyl side group. This is Protoheme IX farnesyltransferase from Listeria welshimeri serovar 6b (strain ATCC 35897 / DSM 20650 / CCUG 15529 / CIP 8149 / NCTC 11857 / SLCC 5334 / V8).